The following is a 325-amino-acid chain: Heme A synthase (325 aa).

Transmembrane regions (helical) follow at residues 6–26 (WLAVCILLILSMVSIGGFTRL), 88–108 (LVGRILGLVFFIGLVYFFVVG), 116–136 (LRLCFALVLGVIQGFVGWYMV), 155–175 (LFCASLLFMVLVYEFLSPTVI), and 184–204 (LVGCSLMFLLSMQIILGGLVA). His246 is a heme binding site. 3 helical membrane passes run 248 to 268 (MSAFLLTFICLVCLVISFFYD), 275 to 295 (VFLVASMMLLQMFFGVLTLLF), and 297 to 317 (IPIDIALLHQIMAFILLGICV). His305 contacts heme.

Belongs to the COX15/CtaA family. Type 2 subfamily. As to quaternary structure, interacts with CtaB. It depends on heme b as a cofactor.

The protein resides in the cell membrane. It carries out the reaction Fe(II)-heme o + 2 A + H2O = Fe(II)-heme a + 2 AH2. The protein operates within porphyrin-containing compound metabolism; heme A biosynthesis; heme A from heme O: step 1/1. Its function is as follows. Catalyzes the conversion of heme O to heme A by two successive hydroxylations of the methyl group at C8. The first hydroxylation forms heme I, the second hydroxylation results in an unstable dihydroxymethyl group, which spontaneously dehydrates, resulting in the formyl group of heme A. The protein is Heme A synthase of Neorickettsia sennetsu (strain ATCC VR-367 / Miyayama) (Ehrlichia sennetsu).